Consider the following 119-residue polypeptide: NADH-quinone oxidoreductase subunit A (119 aa).

3 helical membrane-spanning segments follow: residues 9–29 (IFLF…LGYI), 63–83 (LVAI…PWAV), and 88–108 (IGAL…VGFI).

The protein belongs to the complex I subunit 3 family. As to quaternary structure, NDH-1 is composed of 14 different subunits. Subunits NuoA, H, J, K, L, M, N constitute the membrane sector of the complex.

The protein resides in the cell inner membrane. It catalyses the reaction a quinone + NADH + 5 H(+)(in) = a quinol + NAD(+) + 4 H(+)(out). NDH-1 shuttles electrons from NADH, via FMN and iron-sulfur (Fe-S) centers, to quinones in the respiratory chain. The immediate electron acceptor for the enzyme in this species is believed to be ubiquinone. Couples the redox reaction to proton translocation (for every two electrons transferred, four hydrogen ions are translocated across the cytoplasmic membrane), and thus conserves the redox energy in a proton gradient. The protein is NADH-quinone oxidoreductase subunit A of Albidiferax ferrireducens (strain ATCC BAA-621 / DSM 15236 / T118) (Rhodoferax ferrireducens).